The following is a 477-amino-acid chain: Epoxyalcohol synthase CYP5164B1 (477 aa).

C421 lines the heme pocket.

This sequence belongs to the cytochrome P450 family. Heme is required as a cofactor.

The enzyme catalyses (9S)-hydroperoxy-(10E,12Z)-octadecadienoate = (11S)-hydroxy-(9S,10S)-epoxy-(12Z)-octadecenoate. The catalysed reaction is (13S)-hydroperoxy-(9Z,11E)-octadecadienoate = 11-hydroxy-12,13-epoxy-(9Z)-octadecenoate. It participates in lipid metabolism; oxylipin biosynthesis. In terms of biological role, cytochrome P450 epoxyalcohol synthase involved in the metabolism of oxylipins 'ectocarpins' natural products, such as hybridalactone, ecklonilactones and derivatives. Isomerizes the hydroperoxides into epoxyalcohols via epoxyallylic radical. Can use linoleic acid 9-hydroperoxide ((9S,10E,12Z)-9-hydroperoxy-10,12-octadecadienoic, 9-HPOD) as preferred substrate to produce (9S,10S,11S,12Z)-9,10-epoxy-11-hydroxy-12-octadecenoic acid and, to a lower extent, active with linoleate 13-hydroperoxide ((9Z,11E,13S)-13-hydroperoxy-9,11-octadecadienoic, 13-HPOD) to produce 11-hydroxy-12,13-epoxy-9-octadecenoic acid. No activity toward alpha-linolenic acid 9- and 13-hydroperoxides, and toward eicosapentaenoic acid 15-hydroperoxide. The protein is Epoxyalcohol synthase CYP5164B1 of Ectocarpus siliculosus (Brown alga).